Here is a 234-residue protein sequence, read N- to C-terminus: Zinc finger BED domain-containing protein 3 (234 aa).

Positions 19-42 are disordered; it reads AAARGGQCPGLGPAPTPTPPGRLG. Residues 43–104 form a BED-type zinc finger; sequence APYSEAWGYF…SAHRRELESS (62 aa). 4 residues coordinate Zn(2+): Cys-69, Cys-72, His-92, and His-97. 2 disordered regions span residues 94-126 and 202-225; these read RSAH…AAPE and REGA…GDRD. The span at 111–122 shows a compositional bias: pro residues; the sequence is PAAPCPPPPGPA. Over residues 216–225 the composition is skewed to basic and acidic residues; the sequence is LKDDPEGDRD.

Associates with the subcortical maternal complex (SCMC) composed of at least NLRP5, KHDC3L, OOEP, and TLE6 via interaction with NLRP5 and TLE6. Interacts with AXIN1; the interaction is direct, enhanced by protein kinase GSK3B and casein kinase CSNK1E activities and decreases GSK3B-induced beta-catenin serine and threonine phosphorylations. In terms of tissue distribution, secreted in blood plasma, and expressed in skeletal muscle and adipose tissue (at protein level).

The protein resides in the cytoplasm. The protein localises to the membrane. It is found in the secreted. Functionally, acts as a positive regulator in the activation of the canonical Wnt/beta-catenin signaling pathway by stabilizing cytoplasmic beta-catenin. Involved in transcription activation of Wnt target gene expression. Plays a role in symmetric division of blastomeres in the early stages of embryogenesis via regulation of mitotic spindle central positioning and organization of the F-actin filament network. Plays a role in regulating the distribution of cellular organelles, via modulation of cytoskeletal dynamics and cytoplasmic lattice formation. In Homo sapiens (Human), this protein is Zinc finger BED domain-containing protein 3 (ZBED3).